The sequence spans 320 residues: tRNA dimethylallyltransferase (320 aa).

Residue 17-24 (GPTASGKT) participates in ATP binding. 19–24 (TASGKT) is a substrate binding site. 3 interaction with substrate tRNA regions span residues 42–45 (DSAL), 166–170 (QRIQR), and 249–254 (RCVGYR).

The protein belongs to the IPP transferase family. As to quaternary structure, monomer. Requires Mg(2+) as cofactor.

It carries out the reaction adenosine(37) in tRNA + dimethylallyl diphosphate = N(6)-dimethylallyladenosine(37) in tRNA + diphosphate. Catalyzes the transfer of a dimethylallyl group onto the adenine at position 37 in tRNAs that read codons beginning with uridine, leading to the formation of N6-(dimethylallyl)adenosine (i(6)A). The chain is tRNA dimethylallyltransferase from Herminiimonas arsenicoxydans.